The primary structure comprises 1138 residues: Myelin regulatory factor (1138 aa).

At 1-768 (MEVVDETEAL…CISQRFLQGT (768 aa)) the chain is on the cytoplasmic side. Disordered stretches follow at residues 56–150 (TASF…YSPQ), 171–200 (VSSR…HYPV), 246–267 (AELP…NTLN), and 279–339 (PGTV…SDSL). Over residues 67–88 (PGSSGLHHLSPPGSGPSPGRHG) the composition is skewed to low complexity. Residue K123 is modified to N6-acetyllysine. The span at 178-198 (PPPPPAHLPGPPPPPPPPPHY) shows a compositional bias: pro residues. A DNA-binding region (NDT80) is located at residues 250-541 (PHPSKKRKHS…SNPGQFESDS (292 aa)). Residues 254–257 (KKRK) carry the Nuclear localization signal motif. The segment covering 286–302 (PPHPARAPSPPWPPQGP) has biased composition (pro residues). The segment covering 329–339 (SPGLLQDSDSL) has biased composition (low complexity). A Nuclear localization signal motif is present at residues 491 to 494 (KKGK). The 110-residue stretch at 587–696 (SDLRAKEHVQ…KLTDNLETRI (110 aa)) folds into the Peptidase S74 domain. Residues 680-711 (GAVKELCKLTDNLETRIDELERWSHKLAKLRR) adopt a coiled-coil conformation. A compositionally biased stretch (polar residues) spans 721 to 733 (SGAFSHAGSQFSR). A disordered region spans residues 721–753 (SGAFSHAGSQFSRAGSVPHKKRPPKLANKSSPA). The required for interaction with TMEM98 stretch occupies residues 765–1003 (LQGTIIALVV…QGQLDPAPSL (239 aa)). Residues 769-789 (IIALVVVMAFSVVSMSTLYVL) form a helical membrane-spanning segment. Residues 790–1138 (SLRSEEDLVD…YYFHFYRLCD (349 aa)) lie on the Lumenal side of the membrane. Positions 891–900 (ATDPALGPTL) are enriched in low complexity. Disordered stretches follow at residues 891–922 (ATDP…APLP) and 951–999 (ASPV…QLDP). 2 stretches are compositionally biased toward polar residues: residues 961-974 (QSKT…NLQS) and 987-999 (PAQF…QLDP). N-linked (GlcNAc...) asparagine glycans are attached at residues N1030, N1052, and N1116.

This sequence belongs to the MRF family. As to quaternary structure, homotrimer. Interacts (via C-terminal region) with TMEM98; the interaction inhibits MYRF self-cleavage. Post-translationally, glycosylated. Follows autocatalytic cleavage via the peptidase S74 domain. Autoprocessing is apparently constitutive and is essential for transcriptional activity. Autocatalytic cleavage is inhibited by interaction with TMEM98. Specifically expressed by postmitotic oligodendrocytes in the CNS. Not detected in the peripheral nervous system (PNS).

Its subcellular location is the endoplasmic reticulum membrane. It localises to the nucleus. The protein resides in the cytoplasm. Its function is as follows. Constitutes a precursor of the transcription factor. Mediates the autocatalytic cleavage that releases the Myelin regulatory factor, N-terminal component that specifically activates transcription of central nervous system (CNS) myelin genes. Membrane-bound part that has no transcription factor activity and remains attached to the endoplasmic reticulum membrane following cleavage. In terms of biological role, transcription factor that specifically activates expression of myelin genes such as MBP, MOG, MAG, DUSP15 and PLP1 during oligodendrocyte (OL) maturation, thereby playing a central role in oligodendrocyte maturation and CNS myelination. Specifically recognizes and binds DNA sequence 5'-CTGGYAC-3' in the regulatory regions of myelin-specific genes and directly activates their expression. Not only required during oligodendrocyte differentiation but is also required on an ongoing basis for the maintenance of expression of myelin genes and for the maintenance of a mature, viable oligodendrocyte phenotype. In Mus musculus (Mouse), this protein is Myelin regulatory factor (Myrf).